The following is a 201-amino-acid chain: Adenylyl-sulfate kinase (201 aa).

35-42 contacts ATP; sequence GLSGSGKS. The active-site Phosphoserine intermediate is the Ser109.

The protein belongs to the APS kinase family.

The catalysed reaction is adenosine 5'-phosphosulfate + ATP = 3'-phosphoadenylyl sulfate + ADP + H(+). It functions in the pathway sulfur metabolism; hydrogen sulfide biosynthesis; sulfite from sulfate: step 2/3. In terms of biological role, catalyzes the synthesis of activated sulfate. The polypeptide is Adenylyl-sulfate kinase (Shigella boydii serotype 18 (strain CDC 3083-94 / BS512)).